The sequence spans 383 residues: Multidrug resistance protein MexA (383 aa).

A signal peptide spans 1–23 (MQRTPAMRVLVPALLVAISALSG). Cys-24 is lipidated: N-palmitoyl cysteine. Cys-24 carries the S-diacylglycerol cysteine lipid modification. A coiled-coil region spans residues 97 to 151 (ATYEADYQSAQANLASTQEQAQRYKLLVADQAVSKQQYADANAAYLQSKAAVEQA).

It belongs to the membrane fusion protein (MFP) (TC 8.A.1) family. Component of the MexAB-OprM multidrug efflux complex, composed of six MexA subunits forming a hexameric tube, binding to a MexB trimer, which interact with the trimeric OprM outer membrane channel protein. OprM is thought to not directly contact MexB; instead, MexA joins MexB and OprM by forming a funnel-like hexamer anchored to the inner membrane. MexA may initially form a hexameric ring complex with MexB prior to OprM, then OprM undergoes a conformational change as it contacts MexA, allowing the periplasmic gate to open. It is thought that, under high intracellular substrate concentration, MexB ejects substrate into the tunnel formed by MexA-OprM; as the substrate level declines, conformational changes in MexB cause efflux to reduce and stop and the complex shifts to the closed state. MexB subunit acts as a substrate:proton antiporter and activity is enhanced significantly when in complex with MexA and OprM, in vitro.

It localises to the cell inner membrane. With respect to regulation, export of antibiotics and solvents is dramatically decreased in the presence of the protonophore carbonyl cyanide m-chlorophenylhydrazone (CCCP), therefore may be driven by a proton gradient. Antibiotic efflux is inhibited by pyridopyrimidine derivatives, such as ABI-PP, acting by binding to a hydrophobic pocket in MexB. Functionally, the periplasmic linker component of the MexAB-OprM efflux system that confers multidrug resistance. Functions as the major efflux pump for n-hexane and p-xylene efflux. Has been shown in one study to be involved in the active efflux of the autoinducer N-(3-oxododecanoyl) homoserine lactone, thereby playing an indirect role in quorum-sensing; but has been shown in another study not to be involved in efflux of this autoinducer. Over-expression of the pump increases antibiotic and solvent efflux capacities. Implicated in the secretion of the siderophore pyoverdine. In Pseudomonas aeruginosa (strain ATCC 15692 / DSM 22644 / CIP 104116 / JCM 14847 / LMG 12228 / 1C / PRS 101 / PAO1), this protein is Multidrug resistance protein MexA (mexA).